A 130-amino-acid chain; its full sequence is Large-conductance mechanosensitive channel (130 aa).

The next 2 helical transmembrane spans lie at 11–31 (FALK…AAFG) and 70–90 (GAFI…FIFV).

This sequence belongs to the MscL family. Homopentamer.

It is found in the cell membrane. In terms of biological role, channel that opens in response to stretch forces in the membrane lipid bilayer. May participate in the regulation of osmotic pressure changes within the cell. The chain is Large-conductance mechanosensitive channel from Listeria welshimeri serovar 6b (strain ATCC 35897 / DSM 20650 / CCUG 15529 / CIP 8149 / NCTC 11857 / SLCC 5334 / V8).